A 100-amino-acid chain; its full sequence is Small ribosomal subunit protein uS14c (100 aa).

The protein belongs to the universal ribosomal protein uS14 family. Part of the 30S ribosomal subunit.

It localises to the plastid. It is found in the chloroplast. Binds 16S rRNA, required for the assembly of 30S particles. The sequence is that of Small ribosomal subunit protein uS14c from Populus alba (White poplar).